A 242-amino-acid polypeptide reads, in one-letter code: UPF0309 protein BAbS19_II03080 (242 aa).

The SIS domain occupies 30–214; it reads AADLIAAAAR…ARLVGEGDAP (185 aa).

Belongs to the UPF0309 family.

This chain is UPF0309 protein BAbS19_II03080, found in Brucella abortus (strain S19).